Consider the following 189-residue polypeptide: UPF0312 protein VC0395_0473/VC395_A0785 (189 aa).

The signal sequence occupies residues 1 to 22 (MKKTLMAVGLAAVISIPFAANA).

It belongs to the UPF0312 family. Type 1 subfamily.

Its subcellular location is the periplasm. The protein is UPF0312 protein VC0395_0473/VC395_A0785 of Vibrio cholerae serotype O1 (strain ATCC 39541 / Classical Ogawa 395 / O395).